Consider the following 546-residue polypeptide: Chaperonin GroEL (546 aa).

ATP-binding positions include 30-33 (TLGP), Lys-51, 87-91 (DGTTT), Gly-415, and Asp-496. Residues 526–546 (PQKDAPAGGGMPDMGGMGGMM) are disordered. The span at 532–546 (AGGGMPDMGGMGGMM) shows a compositional bias: gly residues.

The protein belongs to the chaperonin (HSP60) family. Forms a cylinder of 14 subunits composed of two heptameric rings stacked back-to-back. Interacts with the co-chaperonin GroES.

The protein localises to the cytoplasm. It catalyses the reaction ATP + H2O + a folded polypeptide = ADP + phosphate + an unfolded polypeptide.. Functionally, together with its co-chaperonin GroES, plays an essential role in assisting protein folding. The GroEL-GroES system forms a nano-cage that allows encapsulation of the non-native substrate proteins and provides a physical environment optimized to promote and accelerate protein folding. This Ruegeria pomeroyi (strain ATCC 700808 / DSM 15171 / DSS-3) (Silicibacter pomeroyi) protein is Chaperonin GroEL.